The following is a 425-amino-acid chain: Phosphoribosylamine--glycine ligase (425 aa).

The ATP-grasp domain occupies 109–315; sequence KALMQEAGIP…LEELILACVQ (207 aa). Position 135-195 (135-195) interacts with ATP; it reads IQAQGAPIVV…EECLTGQEVS (61 aa). Mg(2+)-binding residues include glutamate 285 and asparagine 287.

The protein belongs to the GARS family. Requires Mg(2+) as cofactor. Mn(2+) serves as cofactor.

It catalyses the reaction 5-phospho-beta-D-ribosylamine + glycine + ATP = N(1)-(5-phospho-beta-D-ribosyl)glycinamide + ADP + phosphate + H(+). The protein operates within purine metabolism; IMP biosynthesis via de novo pathway; N(1)-(5-phospho-D-ribosyl)glycinamide from 5-phospho-alpha-D-ribose 1-diphosphate: step 2/2. This Nostoc sp. (strain PCC 7120 / SAG 25.82 / UTEX 2576) protein is Phosphoribosylamine--glycine ligase.